The following is a 572-amino-acid chain: Nucleolin 1 (572 aa).

Disordered regions lie at residues 1–312 and 488–572; these read MGKA…ESAT and DEAK…FGDE. Over residues 7–21 the composition is skewed to low complexity; the sequence is KSVAVAVAPAAVPAK. Basic and acidic residues predominate over residues 27–38; sequence KREAEDEIEKAV. 2 stretches are compositionally biased toward low complexity: residues 45–58 and 72–81; these read AAAA…PAPK and KAASSSSGSS. Acidic residues-rich tracts occupy residues 82-91, 109-122, 144-156, 177-191, 208-222, 235-247, and 261-276; these read SEEDSSESEE, SSDE…DDED, SESD…DEDE, DSSE…SDED, STDG…EDED, SDEE…ESSD, and ESSE…EEDE. The segment covering 300–311 has biased composition (polar residues); it reads PASNQSQGTESA. RRM domains are found at residues 311–387 and 411–492; these read ATLF…LAHE and QSIF…EAKP. 2 stretches are compositionally biased toward basic and acidic residues: residues 488-520 and 528-545; these read DEAK…DRFG and GGRD…DGGR. Polar residues predominate over residues 553–566; that stretch reads QSRQSAGTASTGKK.

Its subcellular location is the nucleus. It is found in the nucleolus. In terms of biological role, involved in pre-rRNA processing and ribosome assembly. This is Nucleolin 1 from Oryza sativa subsp. japonica (Rice).